The chain runs to 469 residues: uncharacterized protein (469 aa).

The N-terminal stretch at 1–19 (MRINFVLLITLILPWFVSG) is a signal peptide. 7 helical membrane-spanning segments follow: residues 199–219 (IKST…TWLL), 236–256 (AFWV…MVAI), 283–303 (AYTS…PALV), 305–325 (YYVY…FAPL), 338–358 (ILLK…PFFA), 386–406 (IALA…RPLL), and 413–433 (GFQL…AFLF).

The protein resides in the membrane. This is an uncharacterized protein from Schizosaccharomyces pombe (strain 972 / ATCC 24843) (Fission yeast).